The sequence spans 548 residues: Esterase-5A (548 aa).

The N-terminal stretch at 1–21 (MHLVRWLICLIQLWVQLGAAG) is a signal peptide. The cysteines at positions 87 and 106 are disulfide-linked. Asn-95 and Asn-116 each carry an N-linked (GlcNAc...) asparagine glycan. Ser-210 functions as the Acyl-ester intermediate in the catalytic mechanism. Cys-262 and Cys-274 form a disulfide bridge. An N-linked (GlcNAc...) asparagine glycan is attached at Asn-479. Residues Cys-518 and Cys-539 are joined by a disulfide bond.

It belongs to the type-B carboxylesterase/lipase family.

It is found in the secreted. It carries out the reaction a carboxylic ester + H2O = an alcohol + a carboxylate + H(+). The chain is Esterase-5A (Est-5A) from Drosophila pseudoobscura pseudoobscura (Fruit fly).